Here is a 375-residue protein sequence, read N- to C-terminus: MATSKDYYEILGVSRDADQKEIKKAYRRLARKYHPDINKDDPDAEEKFKEISEAYEILSDPDKRARYDQYGHAGINEEDFNFEDFAQRGFGGFDDIFDMFFGGGMGRRRRGPRPGADLQYRMKIPFEDAAFGTTKKITIPRTETCDTCNGTGAKPGTSPKTCPQCNGSGQVRYTQRTPFGQFAQTRTCDRCGGRGTIIDDPCPTCQGSGKVRKQRKITVKIPPGVDTGTRLRMPNEGEAGDKGAPNGDLYIIIEVEPHDIFERKDDDIYCEVPISFVQAALGDKIEVPTLEGKVKFTIPEGTQPDTVFRLKNKGIPHLNGRGRGDEFIKVRVVIPEKMNDEQKELLRKFAEISGDEINPEQKSFIKKVKDAFGVG.

The 66-residue stretch at 6 to 71 folds into the J domain; the sequence is DYYEILGVSR…DKRARYDQYG (66 aa). Residues 132–214 form a CR-type zinc finger; it reads GTTKKITIPR…CQGSGKVRKQ (83 aa). Zn(2+) is bound by residues C145, C148, C162, C165, C188, C191, C202, and C205. CXXCXGXG motif repeat units follow at residues 145 to 152, 162 to 169, 188 to 195, and 202 to 209; these read CDTCNGTG, CPQCNGSG, CDRCGGRG, and CPTCQGSG. A disordered region spans residues 222–243; it reads PPGVDTGTRLRMPNEGEAGDKG.

Belongs to the DnaJ family. In terms of assembly, homodimer. Requires Zn(2+) as cofactor.

It is found in the cytoplasm. Functionally, participates actively in the response to hyperosmotic and heat shock by preventing the aggregation of stress-denatured proteins and by disaggregating proteins, also in an autonomous, DnaK-independent fashion. Unfolded proteins bind initially to DnaJ; upon interaction with the DnaJ-bound protein, DnaK hydrolyzes its bound ATP, resulting in the formation of a stable complex. GrpE releases ADP from DnaK; ATP binding to DnaK triggers the release of the substrate protein, thus completing the reaction cycle. Several rounds of ATP-dependent interactions between DnaJ, DnaK and GrpE are required for fully efficient folding. Also involved, together with DnaK and GrpE, in the DNA replication of plasmids through activation of initiation proteins. The chain is Chaperone protein DnaJ from Halothermothrix orenii (strain H 168 / OCM 544 / DSM 9562).